The following is a 485-amino-acid chain: MLLTQLHCPYLLLLLVVLSCLPKAPSAQVMDFLFEKWKLYSDQCHHNLSLLPPPTELVCNRTFDKYSCWPDTPPNTTANISCPWYLPWYHKVQHRLVFKRCGPDGQWVRGPRGQSWRDASQCQMDDDEIEVQKGVAKMYSSYQVMYTVGYSLSLGALLLALVILLGLRKLHCTRNYIHGNLFASFVLKAGSVLVIDWLLKTRYSQKIGDDLSVSVWLSDGAVAGCRVATVIMQYGIIANYCWLLVEGVYLYSLLSITTFSEKSFFSLYLCIGWGSPLLFVIPWVVVKCLFENVQCWTSNDNMGFWWILRIPVLLAILINFFIFVRIIHLLVAKLRAHQMHYADYKFRLARSTLTLIPLLGVHEVVFAFVTDEHAQGTLRSTKLFFDLFFSSFQGLLVAVLYCFLNKEVQAELLRRWRRWQEGKALQEERMASSHGSHMAPAGTCHGDPCEKLQLMSAGSSSGTGCEPSAKTSLASSLPRLADSPT.

The N-terminal stretch at 1-26 (MLLTQLHCPYLLLLLVVLSCLPKAPS) is a signal peptide. Topologically, residues 27–137 (AQVMDFLFEK…EIEVQKGVAK (111 aa)) are extracellular. Intrachain disulfides connect cysteine 44–cysteine 68, cysteine 59–cysteine 101, and cysteine 82–cysteine 122. Residues asparagine 47, asparagine 60, asparagine 75, and asparagine 79 are each glycosylated (N-linked (GlcNAc...) asparagine). The chain crosses the membrane as a helical span at residues 138 to 162 (MYSSYQVMYTVGYSLSLGALLLALV). The Cytoplasmic segment spans residues 163–174 (ILLGLRKLHCTR). A helical membrane pass occupies residues 175 to 199 (NYIHGNLFASFVLKAGSVLVIDWLL). Residues 200-226 (KTRYSQKIGDDLSVSVWLSDGAVAGCR) lie on the Extracellular side of the membrane. Residues cysteine 225 and cysteine 295 are joined by a disulfide bond. A helical transmembrane segment spans residues 227-250 (VATVIMQYGIIANYCWLLVEGVYL). Over 251 to 264 (YSLLSITTFSEKSF) the chain is Cytoplasmic. A helical transmembrane segment spans residues 265–286 (FSLYLCIGWGSPLLFVIPWVVV). Over 287–304 (KCLFENVQCWTSNDNMGF) the chain is Extracellular. A helical membrane pass occupies residues 305–327 (WWILRIPVLLAILINFFIFVRII). Topologically, residues 328 to 351 (HLLVAKLRAHQMHYADYKFRLARS) are cytoplasmic. Residues 351-354 (STLT) form an important for allosteric inhibitor binding region. A helical membrane pass occupies residues 352–370 (TLTLIPLLGVHEVVFAFVT). The Extracellular segment spans residues 371–382 (DEHAQGTLRSTK). A helical transmembrane segment spans residues 383 to 403 (LFFDLFFSSFQGLLVAVLYCF). Over 404–485 (LNKEVQAELL…SLPRLADSPT (82 aa)) the chain is Cytoplasmic. Positions 455-485 (MSAGSSSGTGCEPSAKTSLASSLPRLADSPT) are disordered. Over residues 456-475 (SAGSSSGTGCEPSAKTSLAS) the composition is skewed to polar residues. Residues serine 460 and serine 476 each carry the phosphoserine modification.

It belongs to the G-protein coupled receptor 2 family. Ligand-binding promotes phosphorylation of serine residues in the C-terminal cytoplasmic domain. Phosphorylation is important for receptor endocytosis after ligand-binding.

The protein resides in the cell membrane. Its function is as follows. G-protein coupled receptor for glucagon that plays a central role in the regulation of blood glucose levels and glucose homeostasis. Regulates the rate of hepatic glucose production by promoting glycogen hydrolysis and gluconeogenesis. Plays an important role in mediating the responses to fasting. Ligand binding causes a conformation change that triggers signaling via guanine nucleotide-binding proteins (G proteins) and modulates the activity of down-stream effectors, such as adenylate cyclase. Promotes activation of adenylate cyclase. Besides, plays a role in signaling via a phosphatidylinositol-calcium second messenger system. This is Glucagon receptor (Gcgr) from Rattus norvegicus (Rat).